A 192-amino-acid chain; its full sequence is Photosystem I assembly protein Ycf4 (192 aa).

2 helical membrane-spanning segments follow: residues 30-52 (YFWATAVSIGGLGFFLAGLSSYL) and 72-94 (IAIGFYGVAALLLATYLWLAIAW).

This sequence belongs to the Ycf4 family.

The protein resides in the cellular thylakoid membrane. Its function is as follows. Seems to be required for the assembly of the photosystem I complex. The sequence is that of Photosystem I assembly protein Ycf4 from Thermosynechococcus vestitus (strain NIES-2133 / IAM M-273 / BP-1).